Here is a 281-residue protein sequence, read N- to C-terminus: L-cysteine S-thiosulfotransferase subunit SoxA (281 aa).

The N-terminal stretch at 1–25 is a signal peptide; the sequence is MTKHGFLLATLVLAGATLPIGPVTA. C99 and C130 are disulfide-bonded. The Cytochrome c domain occupies 175–281; it reads AAYEQGKRFY…LELNGPGARK (107 aa). The heme site is built by C195 and H199. R238 provides a ligand contact to substrate. C242 provides a ligand contact to heme. The active-site Cysteine persulfide intermediate is C242.

This sequence belongs to the SoxA family. Heterodimer of SoxA and SoxX. It depends on heme as a cofactor. Cysteine persulfide at Cys-242.

It localises to the periplasm. The enzyme catalyses L-cysteinyl-[SoxY protein] + thiosulfate + 2 Fe(III)-[cytochrome c] = S-sulfosulfanyl-L-cysteinyl-[SoxY protein] + 2 Fe(II)-[cytochrome c] + 2 H(+). It catalyses the reaction S-sulfanyl-L-cysteinyl-[SoxY protein] + thiosulfate + 2 Fe(III)-[cytochrome c] = S-(2-sulfodisulfanyl)-L-cysteinyl-[SoxY protein] + 2 Fe(II)-[cytochrome c] + 2 H(+). Its function is as follows. C-type monoheme cytochrome, which is part of the SoxAX cytochrome complex involved in sulfur oxidation. The SoxAX complex catalyzes the formation of a heterodisulfide bond between the conserved cysteine residue on a sulfur carrier SoxYZ complex subunit SoxY and thiosulfate or other inorganic sulfur substrates. This leads to the intermediary formation of conspicuous sulfur globules inside of the cells. This is L-cysteine S-thiosulfotransferase subunit SoxA from Allochromatium vinosum (Chromatium vinosum).